Here is a 373-residue protein sequence, read N- to C-terminus: UDP-N-acetylenolpyruvoylglucosamine reductase (373 aa).

Residues 30 to 203 (LACTANSVVT…SRVGFRLHTD (174 aa)) enclose the FAD-binding PCMH-type domain. Residue Arg180 is part of the active site. Ser258 (proton donor) is an active-site residue. The active site involves Glu356.

It belongs to the MurB family. FAD serves as cofactor.

The protein resides in the cytoplasm. The enzyme catalyses UDP-N-acetyl-alpha-D-muramate + NADP(+) = UDP-N-acetyl-3-O-(1-carboxyvinyl)-alpha-D-glucosamine + NADPH + H(+). It functions in the pathway cell wall biogenesis; peptidoglycan biosynthesis. In terms of biological role, cell wall formation. The protein is UDP-N-acetylenolpyruvoylglucosamine reductase of Psychrobacter arcticus (strain DSM 17307 / VKM B-2377 / 273-4).